The following is a 497-amino-acid chain: Cytosol aminopeptidase (497 aa).

The Mn(2+) site is built by Lys267 and Asp272. The active site involves Lys279. 3 residues coordinate Mn(2+): Asp290, Asp349, and Glu351. The active site involves Arg353.

It belongs to the peptidase M17 family. The cofactor is Mn(2+).

The protein localises to the cytoplasm. It carries out the reaction Release of an N-terminal amino acid, Xaa-|-Yaa-, in which Xaa is preferably Leu, but may be other amino acids including Pro although not Arg or Lys, and Yaa may be Pro. Amino acid amides and methyl esters are also readily hydrolyzed, but rates on arylamides are exceedingly low.. The enzyme catalyses Release of an N-terminal amino acid, preferentially leucine, but not glutamic or aspartic acids.. In terms of biological role, presumably involved in the processing and regular turnover of intracellular proteins. Catalyzes the removal of unsubstituted N-terminal amino acids from various peptides. In Pseudomonas putida (Arthrobacter siderocapsulatus), this protein is Cytosol aminopeptidase (pepA).